The chain runs to 219 residues: Cytochrome c biogenesis ATP-binding export protein CcmA (219 aa).

In terms of domain architecture, ABC transporter spans 10 to 218 (ISAVNLTCIR…TLDYSYDSAV (209 aa)). Residue 42–49 (GPNGSGKT) participates in ATP binding.

This sequence belongs to the ABC transporter superfamily. CcmA exporter (TC 3.A.1.107) family. The complex is composed of two ATP-binding proteins (CcmA) and two transmembrane proteins (CcmB).

The protein resides in the cell inner membrane. The catalysed reaction is heme b(in) + ATP + H2O = heme b(out) + ADP + phosphate + H(+). Its function is as follows. Part of the ABC transporter complex CcmAB involved in the biogenesis of c-type cytochromes; once thought to export heme, this seems not to be the case, but its exact role is uncertain. Responsible for energy coupling to the transport system. The polypeptide is Cytochrome c biogenesis ATP-binding export protein CcmA (Colwellia psychrerythraea (strain 34H / ATCC BAA-681) (Vibrio psychroerythus)).